The primary structure comprises 601 residues: Glutathione-regulated potassium-efflux system protein KefB (601 aa).

A run of 13 helical transmembrane segments spans residues 4-24, 29-49, 55-75, 87-107, 111-131, 152-172, 177-197, 207-227, 230-250, 262-282, 284-304, 324-344, and 356-376; these read ADLL…VPLA, IGAV…GLGF, EILH…GLEL, IFGV…GLLM, FLWQ…TAMA, VLLF…LLAG, HFDW…LIGG, FIAA…LVLS, LFMD…GVLL, AIDP…GMSL, LGVL…LVVI, MQFA…FSTA, and ALLL…MKGI. The region spanning 400–519 is the RCK N-terminal domain; it reads KPQVIVVGFG…AGVTQFSRET (120 aa).

It belongs to the monovalent cation:proton antiporter 2 (CPA2) transporter (TC 2.A.37) family. KefB subfamily. Interacts with the regulatory subunit KefG.

Its subcellular location is the cell inner membrane. Its function is as follows. Pore-forming subunit of a potassium efflux system that confers protection against electrophiles. Catalyzes K(+)/H(+) antiport. This chain is Glutathione-regulated potassium-efflux system protein KefB, found in Salmonella paratyphi B (strain ATCC BAA-1250 / SPB7).